Consider the following 259-residue polypeptide: Dihydroorotate dehydrogenase B (NAD(+)), electron transfer subunit (259 aa).

In terms of domain architecture, FAD-binding FR-type spans 2–102 (MQKQNMIVVN…LGPLGHGFPV (101 aa)). FAD is bound by residues 53–56 (RPIS), 70–72 (LYR), and 77–78 (GT). [2Fe-2S] cluster contacts are provided by cysteine 221, cysteine 226, cysteine 229, and cysteine 246.

This sequence belongs to the PyrK family. Heterotetramer of 2 PyrK and 2 PyrD type B subunits. [2Fe-2S] cluster serves as cofactor. Requires FAD as cofactor.

The protein operates within pyrimidine metabolism; UMP biosynthesis via de novo pathway; orotate from (S)-dihydroorotate (NAD(+) route): step 1/1. Responsible for channeling the electrons from the oxidation of dihydroorotate from the FMN redox center in the PyrD type B subunit to the ultimate electron acceptor NAD(+). The sequence is that of Dihydroorotate dehydrogenase B (NAD(+)), electron transfer subunit from Bacillus cereus (strain G9842).